Here is a 224-residue protein sequence, read N- to C-terminus: Zinc finger C4H2 domain-containing protein (224 aa).

The stretch at L11–L104 forms a coiled coil. A C4H2-type zinc finger spans residues C189–C206.

In terms of tissue distribution, expressed in fetal tissues, including in brain, intestine, lung, kidney and muscle. Isoform 1 is expressed in numerous fetal brain regions. Isoform 3 is highly expressed in numerous fetal brain regions and spinal cord.

It localises to the cytoplasm. Its subcellular location is the nucleus. The protein resides in the postsynaptic cell membrane. Plays a role in interneurons differentiation. Involved in neuronal development and in neuromuscular junction formation. This chain is Zinc finger C4H2 domain-containing protein (ZC4H2), found in Homo sapiens (Human).